We begin with the raw amino-acid sequence, 308 residues long: Malate dehydrogenase (308 aa).

6–11 (GAGKVG) is a binding site for NADP(+). R79 and R85 together coordinate substrate. NADP(+) contacts are provided by residues N92 and 115–117 (TTN). 2 residues coordinate substrate: N117 and R148. H172 acts as the Proton acceptor in catalysis.

Belongs to the LDH/MDH superfamily. In terms of assembly, homotetramer.

The catalysed reaction is (S)-malate + NADP(+) = oxaloacetate + NADPH + H(+). The enzyme catalyses (S)-malate + NAD(+) = oxaloacetate + NADH + H(+). In terms of biological role, catalyzes the reversible oxidation of malate to oxaloacetate. Can also oxidize tartrate. Can utilize both NAD and NADP. Catalytic efficiency for malate oxidation is 3-fold higher with NADP. This is Malate dehydrogenase (mdh) from Aeropyrum pernix (strain ATCC 700893 / DSM 11879 / JCM 9820 / NBRC 100138 / K1).